The following is a 273-amino-acid chain: Undecaprenyl-diphosphatase (273 aa).

Transmembrane regions (helical) follow at residues Ser6 to Ser26, Ala45 to Trp65, Leu90 to His110, Leu116 to Ala136, Tyr190 to Leu210, Ala222 to Ile242, and Ile252 to Phe272.

This sequence belongs to the UppP family.

It is found in the cell inner membrane. The catalysed reaction is di-trans,octa-cis-undecaprenyl diphosphate + H2O = di-trans,octa-cis-undecaprenyl phosphate + phosphate + H(+). Catalyzes the dephosphorylation of undecaprenyl diphosphate (UPP). Confers resistance to bacitracin. In Salmonella arizonae (strain ATCC BAA-731 / CDC346-86 / RSK2980), this protein is Undecaprenyl-diphosphatase.